A 389-amino-acid polypeptide reads, in one-letter code: Xylose isomerase (389 aa).

Catalysis depends on residues His-54 and Asp-57. Mg(2+)-binding residues include Glu-181, Glu-217, His-220, Asp-245, Asp-255, Asp-257, and Asp-287.

The protein belongs to the xylose isomerase family. In terms of assembly, homotetramer. Requires Mg(2+) as cofactor.

Its subcellular location is the cytoplasm. The enzyme catalyses alpha-D-xylose = alpha-D-xylulofuranose. Functionally, involved in D-xylose catabolism. This chain is Xylose isomerase (xylA), found in Streptomyces violaceusniger.